Here is a 207-residue protein sequence, read N- to C-terminus: MIVTIDGVAASGKSSVASGVARALGVPYVSSGLLYRAATLLGQDAGLDLTDQASLLAYLRDHPLRLEPLAEGNRVWQGQRDLTPELHSSAVDQGVSQVAAHPEVRAWVDDQLRALTPPFVAEGRDMGTNVFPHAPAKFYLTASPRVRAERRSRERPEAVEAIEAALIQRDALDTTQSAPAPDARVIDTGPLTLEQVIVAITSQLPSQ.

Residue 7–15 (GVAASGKSS) participates in ATP binding.

Belongs to the cytidylate kinase family. Type 1 subfamily.

Its subcellular location is the cytoplasm. It catalyses the reaction CMP + ATP = CDP + ADP. The catalysed reaction is dCMP + ATP = dCDP + ADP. The polypeptide is Cytidylate kinase (Deinococcus deserti (strain DSM 17065 / CIP 109153 / LMG 22923 / VCD115)).